Here is a 180-residue protein sequence, read N- to C-terminus: ATP-dependent protease subunit HslV (180 aa).

T8 is an active-site residue. Residues A165, C168, and T171 each coordinate Na(+).

The protein belongs to the peptidase T1B family. HslV subfamily. In terms of assembly, a double ring-shaped homohexamer of HslV is capped on each side by a ring-shaped HslU homohexamer. The assembly of the HslU/HslV complex is dependent on binding of ATP.

It is found in the cytoplasm. The enzyme catalyses ATP-dependent cleavage of peptide bonds with broad specificity.. Its activity is regulated as follows. Allosterically activated by HslU binding. Protease subunit of a proteasome-like degradation complex believed to be a general protein degrading machinery. The sequence is that of ATP-dependent protease subunit HslV from Staphylococcus epidermidis (strain ATCC 12228 / FDA PCI 1200).